The following is a 256-amino-acid chain: Dihydromonacolin L-[lovastatin nonaketide synthase] thioesterase (256 aa).

Catalysis depends on charge relay system residues serine 122, aspartate 201, and histidine 229.

This sequence belongs to the LovG family.

It carries out the reaction dihydromonacolin L-[lovastatin nonaketide synthase] + H2O = holo-[lovastatin nonaketide synthase] + dihydromonacolin L carboxylate + H(+). Its pathway is polyketide biosynthesis; lovastatin biosynthesis. Its function is as follows. Esterase; part of the gene cluster that mediates the biosynthesis of lovastatin (also known as mevinolin, mevacor or monacolin K), a hypolipidemic inhibitor of (3S)-hydroxymethylglutaryl-coenzyme A (HMG-CoA) reductase (HMGR). The first step in the biosynthesis of lovastatin is the production of dihydromonacolin L acid by the lovastatin nonaketide synthase lovB and the trans-acting enoyl reductase lovC via condensation of one acetyl-CoA unit and 8 malonyl-CoA units. Dihydromonacolin L acid is released from lovB by the thioesterase lovG. Next, dihydromonacolin L acid is oxidized by the dihydromonacolin L monooxygenase lovA twice to form monacolin J acid. The 2-methylbutyrate moiety of lovastatin is synthesized by the lovastatin diketide synthase lovF via condensation of one acetyl-CoA unit and one malonyl-CoA unit. Finally, the covalent attachment of this moiety to monacolin J acid is catalyzed by the transesterase lovD to yield lovastatin. LovD has broad substrate specificity and can also convert monacolin J to simvastatin using alpha-dimethylbutanoyl-S-methyl-3-mercaptopropionate (DMB-S-MMP) as the thioester acyl donor, and can also catalyze the reverse reaction and function as hydrolase in vitro. LovD has much higher activity with LovF-bound 2-methylbutanoate than with free diketide substrates. Esterase that catalyzes the release of covalently bound dihydromonacolin L from LovB during lovastatin biosynthesis. In Aspergillus terreus (strain NIH 2624 / FGSC A1156), this protein is Dihydromonacolin L-[lovastatin nonaketide synthase] thioesterase.